The following is a 439-amino-acid chain: Acyl transferase 7 (439 aa).

Positions 1–25 (MAAAAPDKAVERLSQKLVHPSSPTP) are disordered. Residues H176 and D383 each act as proton acceptor in the active site.

Belongs to the plant acyltransferase family.

In terms of biological role, involved in the incorporation of ferulate into the cell wall. May act as arabinoxylan feruloyl transferase. The polypeptide is Acyl transferase 7 (Oryza sativa subsp. japonica (Rice)).